Consider the following 243-residue polypeptide: MSAPPCVAEVKVESYVFPATAKPPGTAKTLILGGAGARGLNIDGKFVKFTAIGVYLEADAVPSLAVKWNGKSAEELTDSVQFFRDIVTGPFEKLTRITMILPLSGKQYSEKVSENCVAFWKAAGMYGDAESKAIEKFNDVFSDQMFPPGASIFFTQSPHGSLTISFSKEGSMPEIASAVIENKPLSEAVLESIIGSKGVSPEAKQSLAVRLSELFKNGVNGGDAITGKVGCENDAIPQTVVSK.

Positions 50, 115, and 192 each coordinate substrate.

The protein belongs to the chalcone isomerase family.

It carries out the reaction a chalcone = a flavanone.. Its pathway is secondary metabolite biosynthesis; flavonoid biosynthesis. Catalyzes the intramolecular cyclization of bicyclic chalcones into tricyclic (S)-flavanones. Responsible for the isomerization of 4,2',4',6'-tetrahydroxychalcone (also termed chalcone) into naringenin. This chain is Chalcone--flavanone isomerase (CHI), found in Ipomoea batatas (Sweet potato).